The primary structure comprises 119 residues: Large ribosomal subunit protein uL18 (119 aa).

The disordered stretch occupies residues 1–20; it reads MSQIDKASRRQKIKDRSRVK. Positions 9-20 are enriched in basic residues; sequence RRQKIKDRSRVK.

It belongs to the universal ribosomal protein uL18 family. As to quaternary structure, part of the 50S ribosomal subunit; part of the 5S rRNA/L5/L18/L25 subcomplex. Contacts the 5S and 23S rRNAs.

This is one of the proteins that bind and probably mediate the attachment of the 5S RNA into the large ribosomal subunit, where it forms part of the central protuberance. The protein is Large ribosomal subunit protein uL18 of Chlorobium phaeobacteroides (strain DSM 266 / SMG 266 / 2430).